Consider the following 112-residue polypeptide: Keratin-associated protein 12-4 (112 aa).

15 repeat units span residues 10–14 (CPMAC), 20–24 (CVPST), 25–29 (CYPPE), 35–39 (CCCSA), 41–45 (CVALL), 46–50 (CRPLC), 56–60 (CQPAC), 61–65 (CVPSP), 66–70 (CQVAC), 71–75 (CVPVS), 76–80 (CKPVL), 81–85 (CVASF), 86–90 (CPTSG), 91–95 (CCQPF), and 96–100 (CPTLV). The 15 X 5 AA approximate repeats stretch occupies residues 10 to 100 (CPMACPGSPC…CCQPFCPTLV (91 aa)).

The protein belongs to the KRTAP type 12 family. As to quaternary structure, interacts with hair keratins. Restricted to a narrow region of the hair fiber cuticle, lying approximately 20 cell layers above the apex of the dermal papilla of the hair root; not detected in any other tissues.

In terms of biological role, in the hair cortex, hair keratin intermediate filaments are embedded in an interfilamentous matrix, consisting of hair keratin-associated proteins (KRTAP), which are essential for the formation of a rigid and resistant hair shaft through their extensive disulfide bond cross-linking with abundant cysteine residues of hair keratins. The matrix proteins include the high-sulfur and high-glycine-tyrosine keratins. The protein is Keratin-associated protein 12-4 (KRTAP12-4) of Homo sapiens (Human).